Consider the following 493-residue polypeptide: 1-aminocyclopropane-1-carboxylate synthase 1 (493 aa).

Lysine 279 is modified (N6-(pyridoxal phosphate)lysine).

This sequence belongs to the class-I pyridoxal-phosphate-dependent aminotransferase family. In terms of assembly, homodimer. It depends on pyridoxal 5'-phosphate as a cofactor.

It catalyses the reaction S-adenosyl-L-methionine = 1-aminocyclopropane-1-carboxylate + S-methyl-5'-thioadenosine + H(+). It functions in the pathway alkene biosynthesis; ethylene biosynthesis via S-adenosyl-L-methionine; ethylene from S-adenosyl-L-methionine: step 1/2. In terms of biological role, catalyzes the formation of 1-aminocyclopropane-1-carboxylate, a direct precursor of ethylene in higher plants. The chain is 1-aminocyclopropane-1-carboxylate synthase 1 (ACC1A) from Cucurbita pepo (Vegetable marrow).